A 476-amino-acid chain; its full sequence is MMERIRKEMILMERGLHSPTAGKRFSNLSNSAGNAVLEALENSQHPARLSPRLPSAPLHSALGELPAKGKFEIDTLFNLQHTGSESTVSSEISSAAESRKKPGHYSEAAAEADMSSDVEVGCSALRSPGGLGAAQLKENNGKGYAESGSAAGTTTSASGSGLGSLHGGSGGSGGSAALGGSGSGADQVRRYRTAFTREQIARLEKEFYRENYVSRPRRCELAAALNLPETTIKVWFQNRRMKDKRQRLAMSWPHPADPSFYTYMMTHAAATGSLPYPFHSHVPLHYYPHVGVTAAAAAAAASGAAAAASSPFATSIRPLDTFRALSHPYSRPELLCSFRHPGLYQAPAAAAGLNSAASAAAAAAAAAAAASSAAAAGAPPSGGSAPCSCLSCHSSQSAAAAAAAAAAALGSRGGGGGGGGGGGGGGGGAGAGGGSDFGCSAAAPRSESGFLPYSAAVLSKTAVSPPDQRDEAPLTR.

Disordered regions lie at residues 82 to 113 (TGSE…AEAD) and 142 to 185 (KGYA…GSGA). Composition is skewed to low complexity over residues 84–96 (SEST…SSAA) and 147–159 (SGSA…SASG). A compositionally biased stretch (gly residues) spans 160-183 (SGLGSLHGGSGGSGGSAALGGSGS). The segment at residues 188-247 (VRRYRTAFTREQIARLEKEFYRENYVSRPRRCELAAALNLPETTIKVWFQNRRMKDKRQR) is a DNA-binding region (homeobox).

The protein belongs to the even-skipped homeobox family.

Its subcellular location is the nucleus. This chain is Homeobox even-skipped homolog protein 2 (EVX2), found in Homo sapiens (Human).